A 366-amino-acid chain; its full sequence is Phospho-N-acetylmuramoyl-pentapeptide-transferase (366 aa).

The next 10 membrane-spanning stretches (helical) occupy residues 25–45, 70–90, 93–113, 134–154, 174–194, 205–225, 245–265, 268–288, 297–317, and 343–363; these read AGAA…AIIN, GTPT…SLLW, LSNV…AIGF, LGIE…MALA, FVIN…VGAG, GLAI…AYLA, LAVI…FNAP, AIFM…SIAV, VIVG…VFWF, and QVVI…LATL.

Belongs to the glycosyltransferase 4 family. MraY subfamily. The cofactor is Mg(2+).

It localises to the cell inner membrane. It catalyses the reaction UDP-N-acetyl-alpha-D-muramoyl-L-alanyl-gamma-D-glutamyl-meso-2,6-diaminopimeloyl-D-alanyl-D-alanine + di-trans,octa-cis-undecaprenyl phosphate = di-trans,octa-cis-undecaprenyl diphospho-N-acetyl-alpha-D-muramoyl-L-alanyl-D-glutamyl-meso-2,6-diaminopimeloyl-D-alanyl-D-alanine + UMP. The protein operates within cell wall biogenesis; peptidoglycan biosynthesis. Catalyzes the initial step of the lipid cycle reactions in the biosynthesis of the cell wall peptidoglycan: transfers peptidoglycan precursor phospho-MurNAc-pentapeptide from UDP-MurNAc-pentapeptide onto the lipid carrier undecaprenyl phosphate, yielding undecaprenyl-pyrophosphoryl-MurNAc-pentapeptide, known as lipid I. The chain is Phospho-N-acetylmuramoyl-pentapeptide-transferase from Agrobacterium fabrum (strain C58 / ATCC 33970) (Agrobacterium tumefaciens (strain C58)).